The sequence spans 243 residues: Small ribosomal subunit protein uS3 (243 aa).

The KH type-2 domain maps to 39 to 110; that stretch reads IRGFIQKKYA…QVRINVVEIE (72 aa). The disordered stretch occupies residues 215-243; it reads DQPLPVGASPRRKGSRRPQQFEDRSNDGK. Basic and acidic residues predominate over residues 233 to 243; the sequence is QQFEDRSNDGK.

It belongs to the universal ribosomal protein uS3 family. In terms of assembly, part of the 30S ribosomal subunit. Forms a tight complex with proteins S10 and S14.

Binds the lower part of the 30S subunit head. Binds mRNA in the 70S ribosome, positioning it for translation. This chain is Small ribosomal subunit protein uS3, found in Prochlorococcus marinus (strain MIT 9211).